A 451-amino-acid chain; its full sequence is Bifunctional protein GlmU (451 aa).

The tract at residues 1–229 (MQRHAIILAA…FDEIIGVNDR (229 aa)) is pyrophosphorylase. UDP-N-acetyl-alpha-D-glucosamine is bound by residues 8–11 (LAAG), Lys22, Gln72, and 77–78 (GT). Mg(2+) is bound at residue Asp102. UDP-N-acetyl-alpha-D-glucosamine-binding residues include Gly139, Glu154, and Asn227. A Mg(2+)-binding site is contributed by Asn227. Positions 230–250 (LMLSEAEKALQQRINRYHMEN) are linker. The N-acetyltransferase stretch occupies residues 251 to 451 (GVTIIDPSST…QVNKEGYLKK (201 aa)). The UDP-N-acetyl-alpha-D-glucosamine site is built by Arg332 and Lys350. The Proton acceptor role is filled by His362. Positions 365 and 376 each coordinate UDP-N-acetyl-alpha-D-glucosamine. Residues 385–386 (NY), Ala422, and Arg439 contribute to the acetyl-CoA site.

This sequence in the N-terminal section; belongs to the N-acetylglucosamine-1-phosphate uridyltransferase family. In the C-terminal section; belongs to the transferase hexapeptide repeat family. Homotrimer. Mg(2+) serves as cofactor.

Its subcellular location is the cytoplasm. The catalysed reaction is alpha-D-glucosamine 1-phosphate + acetyl-CoA = N-acetyl-alpha-D-glucosamine 1-phosphate + CoA + H(+). The enzyme catalyses N-acetyl-alpha-D-glucosamine 1-phosphate + UTP + H(+) = UDP-N-acetyl-alpha-D-glucosamine + diphosphate. Its pathway is nucleotide-sugar biosynthesis; UDP-N-acetyl-alpha-D-glucosamine biosynthesis; N-acetyl-alpha-D-glucosamine 1-phosphate from alpha-D-glucosamine 6-phosphate (route II): step 2/2. It functions in the pathway nucleotide-sugar biosynthesis; UDP-N-acetyl-alpha-D-glucosamine biosynthesis; UDP-N-acetyl-alpha-D-glucosamine from N-acetyl-alpha-D-glucosamine 1-phosphate: step 1/1. The protein operates within bacterial outer membrane biogenesis; LPS lipid A biosynthesis. Its function is as follows. Catalyzes the last two sequential reactions in the de novo biosynthetic pathway for UDP-N-acetylglucosamine (UDP-GlcNAc). The C-terminal domain catalyzes the transfer of acetyl group from acetyl coenzyme A to glucosamine-1-phosphate (GlcN-1-P) to produce N-acetylglucosamine-1-phosphate (GlcNAc-1-P), which is converted into UDP-GlcNAc by the transfer of uridine 5-monophosphate (from uridine 5-triphosphate), a reaction catalyzed by the N-terminal domain. The protein is Bifunctional protein GlmU of Staphylococcus epidermidis.